The chain runs to 2788 residues: Multiple epidermal growth factor-like domains protein 8 (2788 aa).

The signal sequence occupies residues 1–27; the sequence is MALGGALAAALALAFAVLGPLSHKVLA. Over 28 to 2590 the chain is Extracellular; that stretch reads GDCKGQRQVL…FFRQDQAHID (2563 aa). Intrachain disulfides connect cysteine 30/cysteine 57, cysteine 142/cysteine 152, cysteine 146/cysteine 158, cysteine 174/cysteine 184, cysteine 178/cysteine 191, and cysteine 193/cysteine 202. Positions 30–140 constitute a CUB 1 domain; it reads CKGQRQVLRE…LGFNASFRFS (111 aa). A glycan (N-linked (GlcNAc...) asparagine) is linked at asparagine 50. 2 EGF-like domains span residues 138–168 and 170–203; these read RFSL…GGPD and GLQE…RACD. Kelch repeat units lie at residues 241-287, 290-338, 346-399, 402-453, 459-511, and 525-575; these read LLAV…AVAW, FLVL…AGHA, WLYV…FHAP, TLLV…FHTA, YMVV…APPS, and VLLV…SRDP. 3 PSI domains span residues 561-613, 847-899, and 900-947; these read YCSM…SDCQ, ACSS…ALCP, and LCEE…EECP. The N-linked (GlcNAc...) asparagine glycan is linked to asparagine 1048. The region spanning 1074 to 1115 is the EGF-like 3; calcium-binding domain; it reads DVDECRLGLARCHPRATCLNTPLSYECHCQRGYQGDGITHCN. Cystine bridges form between cysteine 1078–cysteine 1091, cysteine 1085–cysteine 1100, cysteine 1102–cysteine 1114, cysteine 1163–cysteine 1171, cysteine 1165–cysteine 1179, cysteine 1182–cysteine 1191, cysteine 1194–cysteine 1208, cysteine 1211–cysteine 1224, cysteine 1213–cysteine 1231, cysteine 1233–cysteine 1242, cysteine 1245–cysteine 1259, cysteine 1263–cysteine 1302, cysteine 1336–cysteine 1367, cysteine 1407–cysteine 1421, cysteine 1415–cysteine 1433, and cysteine 1435–cysteine 1444. Laminin EGF-like domains are found at residues 1163 to 1210 and 1211 to 1261; these read CGCN…GCRP and CQCN…SCFR. In terms of domain architecture, CUB 2 spans 1263–1405; sequence CGGRALLTNV…WGFNASVGSA (143 aa). An N-linked (GlcNAc...) asparagine glycan is attached at asparagine 1271. Threonine 1353 bears the Phosphothreonine mark. Residues 1403–1445 form the EGF-like 4 domain; it reads GSARCGSGGPGSCPVPQECVPQDGAAGAGLCRCPQGWAGPHCR. 6 Kelch repeats span residues 1522–1570, 1580–1626, 1632–1678, 1684–1734, 1739–1786, and 1795–1840; these read TLWM…SFHA, AMYL…HTLT, SLLL…SAVY, SLYV…HASA, TMVV…ESVA, and RLYI…WCHG. PSI domains follow at residues 1819–1859, 1867–1922, 2003–2061, and 2063–2120; these read PCRL…PPCS, ECRR…NDCR, PCHL…ESCS, and GCAQ…LSCP. N-linked (GlcNAc...) asparagine glycosylation is present at asparagine 2009. The EGF-like 5 domain maps to 2121-2159; the sequence is PEDECANGHHDCNETQNCHDQPHGYECSCKTGYTMDNVT. Disulfide bonds link cysteine 2125/cysteine 2138 and cysteine 2132/cysteine 2147. Residues asparagine 2157 and asparagine 2172 are each glycosylated (N-linked (GlcNAc...) asparagine). 4 cysteine pairs are disulfide-bonded: cysteine 2196/cysteine 2204, cysteine 2198/cysteine 2213, cysteine 2216/cysteine 2225, and cysteine 2228/cysteine 2242. 2 consecutive Laminin EGF-like domains span residues 2196–2244 and 2323–2386; these read CRCN…TCRP and CQCN…QCYR. Residues 2465–2507 are disordered; the sequence is HTVHIQPPPPPPPPPPPADGVPRVASDLGGLGTGSGSGSPVEP. Residues 2470-2483 show a composition bias toward pro residues; that stretch reads QPPPPPPPPPPPAD. A helical transmembrane segment spans residues 2591 to 2611; it reads LFVFFSVFFSCFFLFLSLCVL. Over 2612–2788 the chain is Cytoplasmic; that stretch reads LWKAKQALDQ…SQDNLTSMSL (177 aa). The segment covering 2761 to 2775 has biased composition (gly residues); the sequence is GGAGGSGHGGGGGRK. Positions 2761-2788 are disordered; that stretch reads GGAGGSGHGGGGGRKGLLSQDNLTSMSL. A compositionally biased stretch (polar residues) spans 2779–2788; that stretch reads SQDNLTSMSL.

Expressed in brain.

Its subcellular location is the membrane. Its function is as follows. Acts as a negative regulator of hedgehog signaling. This is Multiple epidermal growth factor-like domains protein 8 (Megf8) from Rattus norvegicus (Rat).